A 191-amino-acid chain; its full sequence is Neuronal calcium sensor 1 (191 aa).

A lipid anchor (N-myristoyl glycine) is attached at Gly-2. 4 EF-hand domains span residues 24–59, 60–95, 96–131, and 144–179; these read EAEIKQWHKGFRKDCPDGKLTLEGFTKIYQQFFPFG, DPSKFANFVFNVFDENKDGFISFGEFLQALSVTSRG, TVEEKLKWAFRLYDLDNDGFITRDELLDIVDAIYRM, and TPEKRVNRIFQVMDKNKDDKLTFDEFLEGSKEDPTI. The Ca(2+) site is built by Asp-73, Asn-75, Asp-77, Glu-84, Asp-109, Asp-111, Asp-113, Glu-120, Asp-157, Asn-159, Asp-161, Lys-163, and Glu-168.

Belongs to the recoverin family.

Functionally, neuronal calcium sensor, regulator of G protein-coupled receptor phosphorylation in a calcium dependent manner. Regulates neurite extension and branching by activity-dependent (Ca2+) influx in growth cones. In Aplysia californica (California sea hare), this protein is Neuronal calcium sensor 1.